A 552-amino-acid chain; its full sequence is Outer dynein arm protein 1 (552 aa).

Positions 1 to 27 are disordered; the sequence is MPSADATRGGGSAGSMGKGTLGAGDTL. Gly residues predominate over residues 8–22; the sequence is RGGGSAGSMGKGTLG. 3 coiled-coil regions span residues 28–59, 120–260, and 331–395; these read GHKSVLDKQRAAIEKLRAQNEQLKTELLLENK, SAKE…QELL, and TLFN…YEKR. Disordered stretches follow at residues 482–515 and 528–552; these read NRIIIEPPSTTQEEEVEGLEPEPVEEDRPLTREH and LETAIKVRPAGADATGGKRGSPTRR. A compositionally biased stretch (acidic residues) spans 493–506; it reads QEEEVEGLEPEPVE.

It belongs to the ODA1/DCC2 family. In terms of assembly, component of the outer dynein arm complex.

It localises to the cytoplasm. Its subcellular location is the cytoskeleton. The protein localises to the cilium axoneme. Its function is as follows. Component of the outer dynein arm complex required for assembly of the outer dynein arm-docking complex (ODA-DC) and the outer dynein arm onto the doublet microtubule. This Chlamydomonas reinhardtii (Chlamydomonas smithii) protein is Outer dynein arm protein 1 (ODA1).